Consider the following 530-residue polypeptide: Estrogen receptor beta (530 aa).

The interval 1–148 (MEIKNSPSSL…SPNAKRDAHF (148 aa)) is modulating. Ser-61 is subject to Phosphoserine; alternate. O-linked (GlcNAc) serine; alternate glycosylation occurs at Ser-61. Phosphoserine; by MAPK occurs at positions 87 and 105. NR C4-type zinc fingers lie at residues 149-169 (CPVCSDYASGYHYGVWSCEGC) and 185-209 (CPATNQCTIDKNRRKSCQACRLRKC). The segment at residues 149 to 214 (CPVCSDYASG…RLRKCYEVGM (66 aa)) is a DNA-binding region (nuclear receptor). In terms of domain architecture, NR LBD spans 264 to 498 (SPEQLVLTLL…DLLLEMLNAH (235 aa)). Over residues 506–515 (SISGSECSST) the composition is skewed to low complexity. The interval 506-530 (SISGSECSSTEDSKNKESSQNLQSQ) is disordered.

It belongs to the nuclear hormone receptor family. NR3 subfamily. As to quaternary structure, binds DNA as a homodimer. Can form a heterodimer with ESR1. Interacts with NCOA1, NCOA3, NCOA5 and NCOA6 coactivators, leading to a strong increase of transcription of target genes. Interacts with UBE1C and AKAP13. Interacts with DNTTIP2. Interacts with CCDC62 in the presence of estradiol/E2; this interaction seems to enhance the transcription of target genes. Interacts with PRMT2. Interacts with CCAR2 (via N-terminus) in a ligand-independent manner. Interacts with DNAAF4. Interacts with RBM39, in the presence of estradiol (E2). Interacts with STUB1/CHIP. In terms of processing, phosphorylation at Ser-87 and Ser-105 recruits NCOA1. In terms of tissue distribution, expressed in the CA1 region of the hippocampus, expression decreases with age (at protein level). Expressed in prostate, ovary, lung, liver, kidney, fat, bone, brain, uterus and testis.

It localises to the nucleus. In terms of biological role, nuclear hormone receptor. Binds estrogens with an affinity similar to that of ESR1/ER-alpha, and activates expression of reporter genes containing estrogen response elements (ERE) in an estrogen-dependent manner. Lacks ligand binding affinity and suppresses ESR1/ER-alpha and ESR2 isoform 1/ER-beta1 mediated transcriptional activation and may act as a dominant negative regulator of estrogen action. Its function is as follows. Unable to bind DNA and activate transcription due to the truncation of the DNA binding domain. This Rattus norvegicus (Rat) protein is Estrogen receptor beta (Esr2).